A 258-amino-acid polypeptide reads, in one-letter code: Type II restriction enzyme HincII (258 aa).

The catalysed reaction is Endonucleolytic cleavage of DNA to give specific double-stranded fragments with terminal 5'-phosphates.. In terms of biological role, a P subtype restriction enzyme that recognizes the double-stranded sequence 5'-GTYRAC-3' and cleaves after Y-3. The chain is Type II restriction enzyme HincII (hincIIR) from Haemophilus influenzae.